A 132-amino-acid chain; its full sequence is Small ribosomal subunit protein uS8 (132 aa).

It belongs to the universal ribosomal protein uS8 family. As to quaternary structure, part of the 30S ribosomal subunit. Contacts proteins S5 and S12.

In terms of biological role, one of the primary rRNA binding proteins, it binds directly to 16S rRNA central domain where it helps coordinate assembly of the platform of the 30S subunit. This Corynebacterium kroppenstedtii (strain DSM 44385 / JCM 11950 / CIP 105744 / CCUG 35717) protein is Small ribosomal subunit protein uS8.